We begin with the raw amino-acid sequence, 253 residues long: Glutamate racemase (253 aa).

Substrate is bound by residues 7–8 (DS) and 39–40 (YG). The Proton donor/acceptor role is filled by cysteine 70. 71–72 (NT) contacts substrate. Cysteine 180 functions as the Proton donor/acceptor in the catalytic mechanism. Residue 181-182 (TH) participates in substrate binding.

The protein belongs to the aspartate/glutamate racemases family.

It catalyses the reaction L-glutamate = D-glutamate. It participates in cell wall biogenesis; peptidoglycan biosynthesis. Provides the (R)-glutamate required for cell wall biosynthesis. This is Glutamate racemase from Halothermothrix orenii (strain H 168 / OCM 544 / DSM 9562).